The following is a 555-amino-acid chain: Phosphoglucomutase (555 aa).

Residues T45, R49, 148–149 (SH), and K158 contribute to the substrate site. S148 serves as the catalytic Phosphoserine intermediate. S148 contributes to the Mg(2+) binding site. Mg(2+)-binding residues include D306, D308, and D310. Substrate contacts are provided by residues 310 to 311 (DR) and 393 to 395 (EES).

This sequence belongs to the phosphohexose mutase family. The cofactor is Mg(2+).

It catalyses the reaction alpha-D-glucose 1-phosphate = alpha-D-glucose 6-phosphate. This enzyme participates in both the breakdown and synthesis of glucose. This chain is Phosphoglucomutase (celB), found in Komagataeibacter xylinus (Gluconacetobacter xylinus).